The sequence spans 282 residues: Phosphatidylserine decarboxylase proenzyme (282 aa).

Catalysis depends on charge relay system; for autoendoproteolytic cleavage activity residues D85, H142, and S244. Residue S244 is the Schiff-base intermediate with substrate; via pyruvic acid; for decarboxylase activity of the active site. S244 carries the post-translational modification Pyruvic acid (Ser); by autocatalysis.

It belongs to the phosphatidylserine decarboxylase family. PSD-B subfamily. Prokaryotic type I sub-subfamily. Heterodimer of a large membrane-associated beta subunit and a small pyruvoyl-containing alpha subunit. Pyruvate serves as cofactor. Post-translationally, is synthesized initially as an inactive proenzyme. Formation of the active enzyme involves a self-maturation process in which the active site pyruvoyl group is generated from an internal serine residue via an autocatalytic post-translational modification. Two non-identical subunits are generated from the proenzyme in this reaction, and the pyruvate is formed at the N-terminus of the alpha chain, which is derived from the carboxyl end of the proenzyme. The autoendoproteolytic cleavage occurs by a canonical serine protease mechanism, in which the side chain hydroxyl group of the serine supplies its oxygen atom to form the C-terminus of the beta chain, while the remainder of the serine residue undergoes an oxidative deamination to produce ammonia and the pyruvoyl prosthetic group on the alpha chain. During this reaction, the Ser that is part of the protease active site of the proenzyme becomes the pyruvoyl prosthetic group, which constitutes an essential element of the active site of the mature decarboxylase.

Its subcellular location is the cell membrane. The catalysed reaction is a 1,2-diacyl-sn-glycero-3-phospho-L-serine + H(+) = a 1,2-diacyl-sn-glycero-3-phosphoethanolamine + CO2. It participates in phospholipid metabolism; phosphatidylethanolamine biosynthesis; phosphatidylethanolamine from CDP-diacylglycerol: step 2/2. Catalyzes the formation of phosphatidylethanolamine (PtdEtn) from phosphatidylserine (PtdSer). The chain is Phosphatidylserine decarboxylase proenzyme from Coxiella burnetii (strain Dugway 5J108-111).